We begin with the raw amino-acid sequence, 297 residues long: MAPSQLPPMFNPTPQDIEMLLAAQCHLGSKNLQVHMEPYLWKTRPDGVNVINIGKTWEKILLAARIIAAIDNPADICVISARPYGQRAVLKFAAHTGATAIAGRFTPGNFTNYITRSFKEPRLIIVTDPRTDAQAIKEASYVNIPVIALCDTDSPTEFVDVAIPTNNKGRHAIGLIWWLLAREVLRLRGTLATRETEWDVVVDLYFYRDPEAEENKEIADETKVPGAEEIGAGAVESGFAGENWDTQAPGAGVPGTAFAAATAAPTSWEADGGDWAASSAAPAGESWAETQPAEAKW.

A compositionally biased stretch (low complexity) spans 263–289; that stretch reads AAPTSWEADGGDWAASSAAPAGESWAE. The interval 263-297 is disordered; that stretch reads AAPTSWEADGGDWAASSAAPAGESWAETQPAEAKW.

This sequence belongs to the universal ribosomal protein uS2 family. As to quaternary structure, component of the small ribosomal subunit. Mature ribosomes consist of a small (40S) and a large (60S) subunit. The 40S subunit contains about 33 different proteins and 1 molecule of RNA (18S). The 60S subunit contains about 49 different proteins and 3 molecules of RNA (25S, 5.8S and 5S). Interacts with rps21.

Its subcellular location is the cytoplasm. Its function is as follows. Required for the assembly and/or stability of the 40S ribosomal subunit. Required for the processing of the 20S rRNA-precursor to mature 18S rRNA in a late step of the maturation of 40S ribosomal subunits. The sequence is that of Small ribosomal subunit protein uS2 (rps0) from Neosartorya fischeri (strain ATCC 1020 / DSM 3700 / CBS 544.65 / FGSC A1164 / JCM 1740 / NRRL 181 / WB 181) (Aspergillus fischerianus).